The chain runs to 675 residues: Zeaxanthin epoxidase, chloroplastic (675 aa).

A chloroplast-targeting transit peptide spans 1-25 (MASTVLYNSLTTSTTVFLRSHLPIS). FAD contacts are provided by residues 92–120 (RILV…KVFE) and 370–383 (KLTW…LLGD). One can recognise an FHA domain in the interval 558–622 (ICLSRKEDEP…HGTWITDNEG (65 aa)).

FAD serves as cofactor.

It is found in the plastid. It localises to the chloroplast thylakoid membrane. It catalyses the reaction all-trans-zeaxanthin + 4 reduced [2Fe-2S]-[ferredoxin] + 2 O2 + 4 H(+) = all-trans-violaxanthin + 4 oxidized [2Fe-2S]-[ferredoxin] + 2 H2O. It participates in plant hormone biosynthesis; abscisate biosynthesis. Inhibited by diphenyleneiodonium (DPI). Functionally, converts zeaxanthin into antheraxanthin and subsequently violaxanthin. Involved in the epoxidation of zeaxanthin. This chain is Zeaxanthin epoxidase, chloroplastic, found in Spinacia oleracea (Spinach).